The sequence spans 86 residues: Cytochrome c oxidase subunit 6B1 (86 aa).

At Ala-2 the chain carries N-acetylalanine. Positions 27-73 (TRNCWQNYLDFHRCEKAMTAKGGDVSVCEWYRRVYKSLCPISWVSTW) constitute a CHCH domain. The Cx9C motif motif lies at 30–40 (CWQNYLDFHRC). 2 disulfides stabilise this stretch: Cys-30–Cys-65 and Cys-40–Cys-54. The Cx10C motif signature appears at 54 to 65 (CEWYRRVYKSLC). Lys-62 bears the N6-acetyllysine mark.

This sequence belongs to the cytochrome c oxidase subunit 6B family. Component of the cytochrome c oxidase (complex IV, CIV), a multisubunit enzyme composed of 14 subunits. The complex is composed of a catalytic core of 3 subunits MT-CO1, MT-CO2 and MT-CO3, encoded in the mitochondrial DNA, and 11 supernumerary subunits COX4I, COX5A, COX5B, COX6A, COX6B, COX6C, COX7A, COX7B, COX7C, COX8 and NDUFA4, which are encoded in the nuclear genome. The complex exists as a monomer or a dimer and forms supercomplexes (SCs) in the inner mitochondrial membrane with NADH-ubiquinone oxidoreductase (complex I, CI) and ubiquinol-cytochrome c oxidoreductase (cytochrome b-c1 complex, complex III, CIII), resulting in different assemblies (supercomplex SCI(1)III(2)IV(1) and megacomplex MCI(2)III(2)IV(2)).

It is found in the mitochondrion inner membrane. Its pathway is energy metabolism; oxidative phosphorylation. Functionally, component of the cytochrome c oxidase, the last enzyme in the mitochondrial electron transport chain which drives oxidative phosphorylation. The respiratory chain contains 3 multisubunit complexes succinate dehydrogenase (complex II, CII), ubiquinol-cytochrome c oxidoreductase (cytochrome b-c1 complex, complex III, CIII) and cytochrome c oxidase (complex IV, CIV), that cooperate to transfer electrons derived from NADH and succinate to molecular oxygen, creating an electrochemical gradient over the inner membrane that drives transmembrane transport and the ATP synthase. Cytochrome c oxidase is the component of the respiratory chain that catalyzes the reduction of oxygen to water. Electrons originating from reduced cytochrome c in the intermembrane space (IMS) are transferred via the dinuclear copper A center (CU(A)) of subunit 2 and heme A of subunit 1 to the active site in subunit 1, a binuclear center (BNC) formed by heme A3 and copper B (CU(B)). The BNC reduces molecular oxygen to 2 water molecules using 4 electrons from cytochrome c in the IMS and 4 protons from the mitochondrial matrix. The polypeptide is Cytochrome c oxidase subunit 6B1 (COX6B1) (Carlito syrichta (Philippine tarsier)).